The sequence spans 368 residues: MAVKVLVVDDSGFFRRRVSEILSADGQIQVVGTGTNGREAIEQALALRPDVITMDYEMPLMDGITAVRNIMQRCPTPVLMFSSLTHEGARVTLDALDAGAVDYLPKNFEDISRNPDKVRQLLCEKVLTIARSNRRSISLPPLPSATSSSHAPASSSSVGASARVGAGASPAPASTSAAPKRKAYRLVAIGTSTGGPVALQRVLTQLPANFPAPLVLIQHMPAAFTKAFAERLDKLCRINVKEAEDGDILRPGLALLAPGGKQMMVDGRGTVRILPGDERLNYKPCVDVTFGSAAKAYNDKVLAVVLTGMGADGREGARLLKQGGSQVWAQDEASCVIYGMPMAVVKANLADAVYGLDDIGRHLVEACQ.

A Response regulatory domain is found at 4 to 121; that stretch reads KVLVVDDSGF…SRNPDKVRQL (118 aa). The residue at position 55 (D55) is a 4-aspartylphosphate. The segment at 138–176 is disordered; it reads SLPPLPSATSSSHAPASSSSVGASARVGAGASPAPASTS. The segment covering 144 to 176 has biased composition (low complexity); the sequence is SATSSSHAPASSSSVGASARVGAGASPAPASTS. In terms of domain architecture, CheB-type methylesterase spans 172–368; that stretch reads PASTSAAPKR…IGRHLVEACQ (197 aa). Catalysis depends on residues S192, H219, and D312.

It belongs to the CheB family. In terms of processing, phosphorylated by CheA. Phosphorylation of the N-terminal regulatory domain activates the methylesterase activity.

Its subcellular location is the cytoplasm. It catalyses the reaction [protein]-L-glutamate 5-O-methyl ester + H2O = L-glutamyl-[protein] + methanol + H(+). The catalysed reaction is L-glutaminyl-[protein] + H2O = L-glutamyl-[protein] + NH4(+). In terms of biological role, involved in chemotaxis. Part of a chemotaxis signal transduction system that modulates chemotaxis in response to various stimuli. Catalyzes the demethylation of specific methylglutamate residues introduced into the chemoreceptors (methyl-accepting chemotaxis proteins or MCP) by CheR. Also mediates the irreversible deamidation of specific glutamine residues to glutamic acid. This chain is Protein-glutamate methylesterase/protein-glutamine glutaminase 1, found in Pseudomonas aeruginosa (strain ATCC 15692 / DSM 22644 / CIP 104116 / JCM 14847 / LMG 12228 / 1C / PRS 101 / PAO1).